We begin with the raw amino-acid sequence, 123 residues long: MRRLYNFLSNSEKRNLRNRKKLNSGVKRLRISIFKSNRHFYAQLINDEKGVTLTSVSTLDAKIKDVCKRGINTETIKQVSSLMIERLSNMKLEQKLVFDRGAYKYTGLVSQFAEALRSSGFKF.

It belongs to the universal ribosomal protein uL18 family. As to quaternary structure, part of the 50S ribosomal subunit; part of the 5S rRNA/L5/L18/L25 subcomplex. Contacts the 5S and 23S rRNAs.

Its function is as follows. This is one of the proteins that bind and probably mediate the attachment of the 5S RNA into the large ribosomal subunit, where it forms part of the central protuberance. This Wolbachia sp. subsp. Brugia malayi (strain TRS) protein is Large ribosomal subunit protein uL18.